Consider the following 115-residue polypeptide: MSYAIIETGGKQVRVEPGRFYDIERLDVDVDGNHTIEKVLLISDDNGVTVGQPYIDGATVEGTVVDQRRAKKVLVYKMLPKKKTRKKRGHRQYFTRFMIDSIKVGGNVVAAKADA.

It belongs to the bacterial ribosomal protein bL21 family. As to quaternary structure, part of the 50S ribosomal subunit. Contacts protein L20.

Its function is as follows. This protein binds to 23S rRNA in the presence of protein L20. In Picosynechococcus sp. (strain ATCC 27264 / PCC 7002 / PR-6) (Agmenellum quadruplicatum), this protein is Large ribosomal subunit protein bL21.